A 109-amino-acid polypeptide reads, in one-letter code: Glutaredoxin-C13 (109 aa).

In terms of domain architecture, Glutaredoxin spans 2 to 108; that stretch reads AEMVARLASE…PMLKNAGALW (107 aa). Cys22 and Cys25 are oxidised to a cystine. A Responsive for interaction with TGA factors motif is present at residues 106-109; sequence ALWL.

It belongs to the glutaredoxin family. CC-type subfamily.

It is found in the cytoplasm. It localises to the nucleus. Its function is as follows. Has a glutathione-disulfide oxidoreductase activity in the presence of NADPH and glutathione reductase. Reduces low molecular weight disulfides and proteins. This Oryza sativa subsp. japonica (Rice) protein is Glutaredoxin-C13 (GRXC13).